The sequence spans 218 residues: Pyridoxine/pyridoxamine 5'-phosphate oxidase (218 aa).

Substrate-binding positions include 12–15 (RLSY) and arginine 70. Residues 65–70 (RTVLLR), 80–81 (YT), lysine 87, and glutamine 109 each bind FMN. Residues tyrosine 127, arginine 131, and serine 135 each coordinate substrate. FMN-binding positions include 145–146 (QS) and tryptophan 191. 197–199 (RLH) provides a ligand contact to substrate. Arginine 201 serves as a coordination point for FMN.

Belongs to the pyridoxamine 5'-phosphate oxidase family. In terms of assembly, homodimer. Requires FMN as cofactor.

It carries out the reaction pyridoxamine 5'-phosphate + O2 + H2O = pyridoxal 5'-phosphate + H2O2 + NH4(+). The enzyme catalyses pyridoxine 5'-phosphate + O2 = pyridoxal 5'-phosphate + H2O2. The protein operates within cofactor metabolism; pyridoxal 5'-phosphate salvage; pyridoxal 5'-phosphate from pyridoxamine 5'-phosphate: step 1/1. It participates in cofactor metabolism; pyridoxal 5'-phosphate salvage; pyridoxal 5'-phosphate from pyridoxine 5'-phosphate: step 1/1. Catalyzes the oxidation of either pyridoxine 5'-phosphate (PNP) or pyridoxamine 5'-phosphate (PMP) into pyridoxal 5'-phosphate (PLP). The polypeptide is Pyridoxine/pyridoxamine 5'-phosphate oxidase (Acinetobacter baumannii (strain SDF)).